The chain runs to 318 residues: Formimidoylglutamase (318 aa).

6 residues coordinate Mn(2+): H130, D155, H157, D159, D246, and D248.

The protein belongs to the arginase family. The cofactor is Mn(2+).

The catalysed reaction is N-formimidoyl-L-glutamate + H2O = formamide + L-glutamate. Its pathway is amino-acid degradation; L-histidine degradation into L-glutamate; L-glutamate from N-formimidoyl-L-glutamate (hydrolase route): step 1/1. Catalyzes the conversion of N-formimidoyl-L-glutamate to L-glutamate and formamide. The chain is Formimidoylglutamase from Klebsiella pneumoniae subsp. pneumoniae (strain ATCC 700721 / MGH 78578).